A 1553-amino-acid chain; its full sequence is ABC-type transporter cctS (1553 aa).

The next 4 membrane-spanning stretches (helical) occupy residues leucine 27–alanine 47, leucine 90–glycine 110, aspartate 114–valine 134, and serine 151–glycine 171. N-linked (GlcNAc...) asparagine glycosylation occurs at asparagine 176. 5 consecutive transmembrane segments (helical) span residues phenylalanine 177 to threonine 197, leucine 286 to leucine 306, threonine 324 to cysteine 344, glycine 413 to leucine 433, and glycine 438 to isoleucine 458. Residues alanine 293–arginine 582 form the ABC transmembrane type-1 1 domain. Asparagine 524 is a glycosylation site (N-linked (GlcNAc...) asparagine). The next 2 membrane-spanning stretches (helical) occupy residues threonine 527–tryptophan 547 and serine 550–phenylalanine 570. A glycan (N-linked (GlcNAc...) asparagine) is linked at asparagine 617. The region spanning asparagine 635–asparagine 874 is the ABC transporter 1 domain. Residue glycine 670–serine 677 participates in ATP binding. An N-linked (GlcNAc...) asparagine glycan is attached at asparagine 725. The chain crosses the membrane as a helical span at residues tryptophan 948–tryptophan 970. Residues valine 951–glutamine 1255 form the ABC transmembrane type-1 2 domain. An N-linked (GlcNAc...) asparagine glycan is attached at asparagine 992. Residues isoleucine 1017–phenylalanine 1037 form a helical membrane-spanning segment. Asparagine 1085 carries an N-linked (GlcNAc...) asparagine glycan. Transmembrane regions (helical) follow at residues isoleucine 1086–serine 1108, alanine 1113–glycine 1135, phenylalanine 1204–valine 1224, and alanine 1229–leucine 1249. Positions valine 1294 to cysteine 1533 constitute an ABC transporter 2 domain. Glycine 1328–serine 1335 is a binding site for ATP.

Belongs to the ABC transporter superfamily.

The protein localises to the membrane. It participates in mycotoxin biosynthesis. Functionally, ABC-type transporter; part of the gene cluster that mediates the biosynthesis of the mycotoxin cyclochlorotine, a hepatotoxic and carcinogenic cyclic chlorinated pentapeptide. CctS is essential for the biosynthesis of cyclochlorotine, maybe as a chloride channel that supplies chloride for chlorination by cctP2. The protein is ABC-type transporter cctS of Talaromyces islandicus (Penicillium islandicum).